A 258-amino-acid chain; its full sequence is Protease HtpX homolog (258 aa).

The next 2 helical transmembrane spans lie at 24–44 (VLLF…LGLG) and 45–65 (GPLF…LISP). Residue H146 coordinates Zn(2+). The active site involves E147. H150 contacts Zn(2+). 2 helical membrane-spanning segments follow: residues 157 to 177 (IVMT…WSTV) and 186 to 206 (LVGI…LFIS). Residue E210 participates in Zn(2+) binding.

Belongs to the peptidase M48B family. Zn(2+) serves as cofactor.

Its subcellular location is the cell membrane. The protein is Protease HtpX homolog of Methanothermobacter thermautotrophicus (strain ATCC 29096 / DSM 1053 / JCM 10044 / NBRC 100330 / Delta H) (Methanobacterium thermoautotrophicum).